Consider the following 622-residue polypeptide: Pyranose 2-oxidase (622 aa).

The first 28 residues, 1 to 28 (MSTSSSDPFYNFAKTSFKSAAAQKASAT), serve as a signal peptide directing secretion. Positions 29 to 38 (SLPPLPGPDQ) are excised as a propeptide. His167 bears the Tele-8alpha-FAD histidine mark. Positions 448 and 450 each coordinate substrate. His548 functions as the Proton acceptor in the catalytic mechanism. Asn593 is a catalytic residue.

It belongs to the GMC oxidoreductase family. As to quaternary structure, homotetramer. It depends on FAD as a cofactor.

Its subcellular location is the periplasm. The enzyme catalyses D-glucose + O2 = 2-dehydro-D-glucose + H2O2. Functionally, catalyzes the oxidation of various aldopyranoses and disaccharides on carbon-2 to the corresponding 2-keto sugars concomitant with the reduction of O(2) to H(2)O(2). Plays an important role in lignin degradation of wood rot fungi by supplying the essential cosubstrate H(2)O(2) for the ligninolytic peroxidases, lignin peroxidase and manganese-dependent peroxidase. The sequence is that of Pyranose 2-oxidase (p2ox) from Trametes pubescens (White-rot fungus).